The sequence spans 798 residues: MNLQLIFWIGLISSVCCVFGQADENRCLKANAKSCGECIQAGPNCGWCTNSTFLQEGMPTSARCDDLEALKKKGCHPNDIENPRGSKDIKKNKNVTNRSKGTAEKLQPEDITQIQPQQLVLQLRSGEPQTFTLKFKRAEDYPIDLYYLMDLSYSMKDDLENVKSLGTDLMNEMRRITSDFRIGFGSFVEKTVMPYISTTPAKLRNPCTNEQNCTSPFSYKNVLSLTDKGEVFNELVGKQRISGNLDSPEGGFDAIMQVAVCGSLIGWRNVTRLLVFSTDAGFHFAGDGKLGGIVLPNDGQCHLENDVYTMSHYYDYPSIAHLVQKLSENNIQTIFAVTEEFQPVYKELKNLIPKSAVGTLSANSSNVIQLIIDAYNSLSSEVILENSKLPEGVTINYKSYCKNGVNGTGENGRKCSNISIGDEVQFEISITANKCPNKNSETIKIKPLGFTEEVEIILQFICECECQGEGIPGSPKCHDGNGTFECGACRCNEGRVGRHCECSTDEVNSEDMDAYCRKENSSEICSNNGECVCGQCVCRKRDNTNEIYSGKFCECDNFNCDRSNGLICGGNGVCKCRVCECNPNYTGSACDCSLDTTSCMAVNGQICNGRGVCECGACKCTDPKFQGPTCEMCQTCLGVCAEHKECVQCRAFNKGEKKDTCAQECSHFNITKVENRDKLPQPGQVDPLSHCKEKDVDDCWFYFTYSVNGNNEATVHVVETPECPTGPDIIPIVAGVVAGIVLIGLALLLIWKLLMIIHDRREFAKFEKEKMNAKWDTGENPIYKSAVTTVVNPKYEGK.

The first 20 residues, 1–20 (MNLQLIFWIGLISSVCCVFG), serve as a signal peptide directing secretion. At 21–728 (QADENRCLKA…ETPECPTGPD (708 aa)) the chain is on the extracellular side. The PSI domain occupies 26–76 (RCLKANAKSCGECIQAGPNCGWCTNSTFLQEGMPTSARCDDLEALKKKGCH). 28 disulfide bridges follow: cysteine 27/cysteine 45, cysteine 35/cysteine 464, cysteine 38/cysteine 64, cysteine 48/cysteine 75, cysteine 207/cysteine 213, cysteine 261/cysteine 301, cysteine 401/cysteine 415, cysteine 435/cysteine 462, cysteine 466/cysteine 486, cysteine 477/cysteine 489, cysteine 491/cysteine 500, cysteine 502/cysteine 533, cysteine 516/cysteine 531, cysteine 525/cysteine 536, cysteine 538/cysteine 553, cysteine 555/cysteine 576, cysteine 560/cysteine 574, cysteine 568/cysteine 579, cysteine 581/cysteine 590, cysteine 592/cysteine 615, cysteine 599/cysteine 613, cysteine 607/cysteine 618, cysteine 620/cysteine 630, cysteine 633/cysteine 636, cysteine 640/cysteine 691, cysteine 646/cysteine 665, cysteine 649/cysteine 661, and cysteine 699/cysteine 723. N-linked (GlcNAc...) asparagine glycosylation occurs at asparagine 50. Over residues 75-91 (CHPNDIENPRGSKDIKK) the composition is skewed to basic and acidic residues. Positions 75-105 (CHPNDIENPRGSKDIKKNKNVTNRSKGTAEK) are disordered. N-linked (GlcNAc...) asparagine glycans are attached at residues asparagine 94 and asparagine 97. One can recognise a VWFA domain in the interval 140–378 (DYPIDLYYLM…QLIIDAYNSL (239 aa)). Mg(2+)-binding residues include serine 152 and serine 154. Residues serine 154, aspartate 157, aspartate 158, and glutamate 189 each coordinate Ca(2+). The segment at 207-213 (CTNEQNC) is CX3CL1-binding. Asparagine 212 carries N-linked (GlcNAc...) asparagine glycosylation. 4 residues coordinate Ca(2+): asparagine 244, aspartate 246, proline 248, and glutamate 249. Mg(2+) is bound at residue glutamate 249. Asparagine 269 carries an N-linked (GlcNAc...) asparagine glycan. The interval 295-314 (LPNDGQCHLENDVYTMSHYY) is CX3CL1-binding. A Ca(2+)-binding site is contributed by alanine 362. N-linked (GlcNAc...) asparagine glycans are attached at residues asparagine 363, asparagine 406, and asparagine 417. The tract at residues 383 to 465 (ILENSKLPEG…IILQFICECE (83 aa)) is interaction with TMEM182. 4 I-EGF domains span residues 466–501 (CQGE…RHCE), 502–554 (CSTD…KFCE), 555–591 (CDNF…SACD), and 592–631 (CSLD…PTCE). Asparagine 481 is a glycosylation site (N-linked (GlcNAc...) asparagine). Asparagine 520 carries N-linked (GlcNAc...) asparagine glycosylation. N-linked (GlcNAc...) asparagine glycosylation occurs at asparagine 584. N-linked (GlcNAc...) asparagine glycosylation is present at asparagine 669. Residues 729–749 (IIPIVAGVVAGIVLIGLALLL) form a helical membrane-spanning segment. The Cytoplasmic segment spans residues 750-798 (IWKLLMIIHDRREFAKFEKEKMNAKWDTGENPIYKSAVTTVVNPKYEGK). A signal for sorting from recycling endosomes; interaction with ACAP1 region spans residues 762-767 (EFAKFE). Threonine 777 is modified (phosphothreonine). The residue at position 783 (tyrosine 783) is a Phosphotyrosine. Serine 785 is subject to Phosphoserine. The segment at 785-792 (SAVTTVVN) is interaction with ITGB1BP1. Position 789 is a phosphothreonine (threonine 789). Residue lysine 794 is modified to N6-acetyllysine; alternate. A Glycyl lysine isopeptide (Lys-Gly) (interchain with G-Cter in SUMO1); alternate cross-link involves residue lysine 794.

The protein belongs to the integrin beta chain family. In terms of assembly, interacts with seprase FAP (seprase); the interaction occurs at the cell surface of invadopodia membrane in a collagen-dependent manner. Heterodimer of an alpha and a beta subunit. Beta-1 associates with either alpha-1, alpha-2, alpha-3, alpha-4, alpha-5, alpha-6, alpha-7, alpha-8, alpha-9, alpha-10, alpha-11 or alpha-V. ITGA6:ITGB1 is found in a complex with CD9; interaction takes place in oocytes and is involved in sperm-egg fusion. Binds LGALS3BP and NMRK2, when associated with alpha-7, but not with alpha-5. Interacts with FLNB, FLNC and RANBP9. Interacts with KRT1 in the presence of RACK1 and SRC. Interacts with JAML; integrin alpha-4/beta-1 may regulate leukocyte to endothelial cells adhesion by controlling JAML homodimerization. Interacts with RAB21. Interacts (via the cytoplasmic region) with RAB25 (via the hypervariable C-terminal region). Interacts with MYO10. Interacts with ITGB1BP1 (via C-terminal region); the interaction is a prerequisite for focal adhesion disassembly. Interacts with TLN1; the interaction is prevented by competitive binding of ITGB1BP1. Interacts with ACAP1; required for ITGB1 recycling. Interacts with ASAP3. Interacts with FERMT2; the interaction is inhibited in presence of ITGB1BP1. Interacts with DAB2. Interacts with FGR and HCK. Interacts with EMP2; the interaction may be direct or indirect and ITGB1 has a heterodimer form. ITGA5:ITGB1 interacts with CCN3. ITGA4:ITGB1 is found in a ternary complex with CX3CR1 and CX3CL1. ITGA5:ITGB1 interacts with FBN1. ITGA5:ITGB1 interacts with IL1B. Interacts with MDK. ITGA4:ITGB1 interacts with MDK; this interaction mediates MDK-induced osteoblast cells migration through PXN phosphorylation. ITGA6:ITGB1 interacts with MDK; this interaction mediates MDK-induced neurite-outgrowth. ITGA5:ITGB1 interacts with ACE2. Interacts with TMEM182 and LAMB1. Interacts with tensin TNS3; TNS3 also interacts with PEAK1, thus acting as an adapter molecule to bridge the association of PEAK1 with ITGB1. Interacts with tensin TNS4; the interaction displaces tensin TNS3 from the ITGB1 cytoplasmic tail and promotes ITGB1 stability. Integrin ITGA9:ITGB1 interacts with SPP1/OPN (via N-terminus). Integrin ITGA9:ITGB1 interacts with TNC/TNFN3 (via the 3rd Fibronectin type-III domain). Integrins ITGA4:ITGB1 and ITGA9:ITGB1 interact with SVEP1 (via Sushi domain 21); thereby inhibit Ca(2+) intracellular signaling and as a result repress vasocontraction. ITGA4:ITGB1 and ITGA5:ITGB1 interacts with SELP. Interacts with CD248. ITGA5:ITGB1 interacts with IGFBP1. ITGA4:ITGB1 interacts with BCAM. Interacts with ADGRG6. Interacts with the C-terminal region of FLNC. Interacts with filamin FLNA isoform 3/VAR-1. As to quaternary structure, interacts with ACE2. Interacts with alpha-7B in cardiomyocytes of adult heart and alpha-7A and alpha-7B in adult skeletal muscle. Interacts with filamin FLNA isoform 3/VAR-1.

The protein localises to the cell membrane. Its subcellular location is the cell projection. The protein resides in the invadopodium membrane. It is found in the ruffle membrane. It localises to the recycling endosome. The protein localises to the melanosome. Its subcellular location is the lamellipodium. The protein resides in the ruffle. It is found in the cell junction. It localises to the focal adhesion. The protein localises to the sarcolemma. In terms of biological role, integrins alpha-1/beta-1, alpha-2/beta-1, alpha-10/beta-1 and alpha-11/beta-1 are receptors for collagen. Integrins alpha-1/beta-1 and alpha-2/beta-2 recognize the proline-hydroxylated sequence G-F-P-G-E-R in collagen. Integrins alpha-2/beta-1, alpha-3/beta-1, alpha-4/beta-1, alpha-5/beta-1, alpha-8/beta-1, alpha-10/beta-1, alpha-11/beta-1 and alpha-V/beta-1 are receptors for fibronectin. Alpha-4/beta-1 recognizes one or more domains within the alternatively spliced CS-1 and CS-5 regions of fibronectin. Integrin alpha-5/beta-1 is a receptor for fibrinogen. Integrin alpha-1/beta-1, alpha-2/beta-1, alpha-6/beta-1 and alpha-7/beta-1 are receptors for lamimin. Integrin alpha-6/beta-1 (ITGA6:ITGB1) is present in oocytes and is involved in sperm-egg fusion. Integrin alpha-4/beta-1 is a receptor for VCAM1 and recognizes the sequence Q-I-D-S in VCAM1. Integrin alpha-9/beta-1 is a receptor for VCAM1, cytotactin and osteopontin. It recognizes the sequence A-E-I-D-G-I-E-L in cytotactin. Integrin alpha-3/beta-1 is a receptor for epiligrin, thrombospondin and CSPG4. Integrin alpha-3/beta-1 provides a docking site for FAP (seprase) at invadopodia plasma membranes in a collagen-dependent manner and hence may participate in the adhesion, formation of invadopodia and matrix degradation processes, promoting cell invasion. Alpha-3/beta-1 may mediate with LGALS3 the stimulation by CSPG4 of endothelial cells migration. Integrin alpha-V/beta-1 is a receptor for vitronectin. Beta-1 integrins recognize the sequence R-G-D in a wide array of ligands. When associated with alpha-7/beta-1 integrin, regulates cell adhesion and laminin matrix deposition. Involved in promoting endothelial cell motility and angiogenesis. Involved in osteoblast compaction through the fibronectin fibrillogenesis cell-mediated matrix assembly process and the formation of mineralized bone nodules. May be involved in up-regulation of the activity of kinases such as PKC via binding to KRT1. Together with KRT1 and RACK1, serves as a platform for SRC activation or inactivation. Plays a mechanistic adhesive role during telophase, required for the successful completion of cytokinesis. ITGA4:ITGB1 binds to fractalkine (CX3CL1) and may act as its coreceptor in CX3CR1-dependent fractalkine signaling. ITGA4:ITGB1 and ITGA5:ITGB1 bind to PLA2G2A via a site (site 2) which is distinct from the classical ligand-binding site (site 1) and this induces integrin conformational changes and enhanced ligand binding to site 1. ITGA5:ITGB1 acts as a receptor for fibrillin-1 (FBN1) and mediates R-G-D-dependent cell adhesion to FBN1. ITGA5:ITGB1 acts as a receptor for fibronectin FN1 and mediates R-G-D-dependent cell adhesion to FN1. ITGA5:ITGB1 is a receptor for IL1B and binding is essential for IL1B signaling. ITGA5:ITGB3 is a receptor for soluble CD40LG and is required for CD40/CD40LG signaling. Plays an important role in myoblast differentiation and fusion during skeletal myogenesis. ITGA9:ITGB1 may play a crucial role in SVEP1/polydom-mediated myoblast cell adhesion. Integrins ITGA9:ITGB1 and ITGA4:ITGB1 repress PRKCA-mediated L-type voltage-gated channel Ca(2+) influx and ROCK-mediated calcium sensitivity in vascular smooth muscle cells via their interaction with SVEP1, thereby inhibit vasocontraction. This is Integrin beta-1 (ITGB1) from Bos taurus (Bovine).